A 124-amino-acid chain; its full sequence is Aspartate 1-decarboxylase (124 aa).

Residue Ser-21 is the Schiff-base intermediate with substrate; via pyruvic acid of the active site. Ser-21 carries the pyruvic acid (Ser) modification. A substrate-binding site is contributed by Thr-53. Tyr-54 functions as the Proton donor in the catalytic mechanism. 69–71 contacts substrate; it reads GAA.

It belongs to the PanD family. Heterooctamer of four alpha and four beta subunits. Pyruvate serves as cofactor. In terms of processing, is synthesized initially as an inactive proenzyme, which is activated by self-cleavage at a specific serine bond to produce a beta-subunit with a hydroxyl group at its C-terminus and an alpha-subunit with a pyruvoyl group at its N-terminus.

The protein localises to the cytoplasm. It catalyses the reaction L-aspartate + H(+) = beta-alanine + CO2. The protein operates within cofactor biosynthesis; (R)-pantothenate biosynthesis; beta-alanine from L-aspartate: step 1/1. Functionally, catalyzes the pyruvoyl-dependent decarboxylation of aspartate to produce beta-alanine. The polypeptide is Aspartate 1-decarboxylase (Dehalococcoides mccartyi (strain ATCC BAA-2266 / KCTC 15142 / 195) (Dehalococcoides ethenogenes (strain 195))).